We begin with the raw amino-acid sequence, 191 residues long: Ribosomal RNA small subunit methyltransferase G (191 aa).

Residues Gly59, 111–112 (IE), and Arg124 contribute to the S-adenosyl-L-methionine site.

It belongs to the methyltransferase superfamily. RNA methyltransferase RsmG family.

The protein resides in the cytoplasm. Its function is as follows. Specifically methylates the N7 position of a guanine in 16S rRNA. This Mycoplasma pneumoniae (strain ATCC 29342 / M129 / Subtype 1) (Mycoplasmoides pneumoniae) protein is Ribosomal RNA small subunit methyltransferase G.